A 552-amino-acid polypeptide reads, in one-letter code: Probable bifunctional methylthioribose-1-phosphate isomerase/methylthioribulose-1-phosphate dehydratase (552 aa).

The tract at residues 1–333 (MRPIDDSSLT…VVTEHGVVHG (333 aa)) is methylthioribose-1-phosphate isomerase activity. Substrate-binding positions include 49-51 (RGA), Arg91, and Gln195. The active-site Proton donor is Asp236. Position 246-247 (246-247 (NK)) interacts with substrate. Positions 334 to 535 (TVAAEPGARI…AVCELVLRTG (202 aa)) are methylthioribulose-1-phosphate dehydratase activity. Zn(2+)-binding residues include His427 and His429.

It in the N-terminal section; belongs to the eIF-2B alpha/beta/delta subunits family. MtnA subfamily. In the C-terminal section; belongs to the aldolase class II family. MtnB subfamily. Zn(2+) serves as cofactor.

The enzyme catalyses 5-(methylsulfanyl)-alpha-D-ribose 1-phosphate = 5-(methylsulfanyl)-D-ribulose 1-phosphate. The catalysed reaction is 5-(methylsulfanyl)-D-ribulose 1-phosphate = 5-methylsulfanyl-2,3-dioxopentyl phosphate + H2O. The protein operates within amino-acid biosynthesis; L-methionine biosynthesis via salvage pathway; L-methionine from S-methyl-5-thio-alpha-D-ribose 1-phosphate: step 1/6. It functions in the pathway amino-acid biosynthesis; L-methionine biosynthesis via salvage pathway; L-methionine from S-methyl-5-thio-alpha-D-ribose 1-phosphate: step 2/6. In terms of biological role, bifunctional protein that catalyzes the interconversion of methylthioribose-1-phosphate (MTR-1-P) into methylthioribulose-1-phosphate (MTRu-1-P), and the dehydration of methylthioribulose-1-phosphate (MTRu-1-P) into 2,3-diketo-5-methylthiopentyl-1-phosphate (DK-MTP-1-P). This Nocardia farcinica (strain IFM 10152) protein is Probable bifunctional methylthioribose-1-phosphate isomerase/methylthioribulose-1-phosphate dehydratase (mtnAB).